A 522-amino-acid chain; its full sequence is Alanine aminotransferase 2 (522 aa).

An N6-(pyridoxal phosphate)lysine modification is found at lysine 340. N6-acetyllysine occurs at positions 414, 504, and 511.

Belongs to the class-I pyridoxal-phosphate-dependent aminotransferase family. Alanine aminotransferase subfamily. Homodimer. Pyridoxal 5'-phosphate is required as a cofactor. As to expression, specifically induced in fatty liver. Highly expressed in muscle, liver and white adipose tissue. Moderately expressed in brain and kidney and expressed at low levels in the heart.

The catalysed reaction is L-alanine + 2-oxoglutarate = pyruvate + L-glutamate. It functions in the pathway amino-acid degradation; L-alanine degradation via transaminase pathway; pyruvate from L-alanine: step 1/1. Functionally, catalyzes the reversible transamination between alanine and 2-oxoglutarate to form pyruvate and glutamate. The protein is Alanine aminotransferase 2 (Gpt2) of Mus musculus (Mouse).